The primary structure comprises 320 residues: Aspartate carbamoyltransferase catalytic subunit (320 aa).

Residues Arg-68 and Thr-69 each coordinate carbamoyl phosphate. Residue Lys-96 coordinates L-aspartate. Carbamoyl phosphate contacts are provided by Arg-118, His-148, and Gln-151. Positions 181 and 236 each coordinate L-aspartate. Positions 277 and 278 each coordinate carbamoyl phosphate.

It belongs to the aspartate/ornithine carbamoyltransferase superfamily. ATCase family. Heterododecamer (2C3:3R2) of six catalytic PyrB chains organized as two trimers (C3), and six regulatory PyrI chains organized as three dimers (R2).

It carries out the reaction carbamoyl phosphate + L-aspartate = N-carbamoyl-L-aspartate + phosphate + H(+). It participates in pyrimidine metabolism; UMP biosynthesis via de novo pathway; (S)-dihydroorotate from bicarbonate: step 2/3. Catalyzes the condensation of carbamoyl phosphate and aspartate to form carbamoyl aspartate and inorganic phosphate, the committed step in the de novo pyrimidine nucleotide biosynthesis pathway. In Polaromonas sp. (strain JS666 / ATCC BAA-500), this protein is Aspartate carbamoyltransferase catalytic subunit.